We begin with the raw amino-acid sequence, 96 residues long: UPF0235 protein YggU (96 aa).

It belongs to the UPF0235 family.

The polypeptide is UPF0235 protein YggU (Escherichia coli O157:H7).